Consider the following 196-residue polypeptide: Protein LIGHT-DEPENDENT SHORT HYPOCOTYLS 6 (196 aa).

The segment covering 1-16 (MESADSGRSDPVKGDD) has biased composition (basic and acidic residues). 2 disordered regions span residues 1-36 (MESA…ESQK) and 149-196 (ARGI…AVPP). Positions 31 to 158 (RYESQKRRDW…ARGIPYEKKK (128 aa)) constitute an ALOG domain. A Nuclear localization signal motif is present at residues 156–160 (KKKRK).

The protein belongs to the plant homeotic and developmental regulators ALOG protein family.

The protein localises to the nucleus. Functionally, probable transcription regulator that acts as a developmental regulator by promoting cell growth in response to light. The sequence is that of Protein LIGHT-DEPENDENT SHORT HYPOCOTYLS 6 (LSH6) from Arabidopsis thaliana (Mouse-ear cress).